A 42-amino-acid polypeptide reads, in one-letter code: Cytochrome b6-f complex subunit 7 (42 aa).

A helical membrane pass occupies residues 19–37 (AVTCIFMTLFGLSLGFALL).

Belongs to the PetM family. As to quaternary structure, the 4 large subunits of the cytochrome b6-f complex are cytochrome b6, subunit IV (17 kDa polypeptide, PetD), cytochrome f and the Rieske protein, while the 4 small subunits are PetG, PetL, PetM and PetN. The complex functions as a dimer.

Its subcellular location is the plastid. It localises to the chloroplast thylakoid membrane. Functionally, component of the cytochrome b6-f complex, which mediates electron transfer between photosystem II (PSII) and photosystem I (PSI), cyclic electron flow around PSI, and state transitions. The sequence is that of Cytochrome b6-f complex subunit 7 from Thalassiosira pseudonana (Marine diatom).